Consider the following 266-residue polypeptide: RNA-binding protein 7 (266 aa).

An N-acetylglycine modification is found at glycine 2. Residues 10 to 87 (RTLFVGNLET…RPIKIQFRSG (78 aa)) form the RRM domain. 2 ZCCHC8 binding regions span residues 25-35 (LLFELFHQAGP) and 59-76 (HEVS…IKLY). Over residues 90-115 (HAPQDVSLSYPQHHVGNSSPTSTSPS) the composition is skewed to polar residues. Positions 90-118 (HAPQDVSLSYPQHHVGNSSPTSTSPSRYE) are disordered. 2 positions are modified to phosphoserine: serine 136 and serine 137. The residue at position 152 (arginine 152) is an Omega-N-methylarginine. Residues 162–266 (SSPLDQSGFS…RDGKWRSSRH (105 aa)) are disordered. Low complexity predominate over residues 173 to 188 (SVQSHSHSFNQSSSSQ). The residue at position 204 (serine 204) is a Phosphoserine. The span at 209 to 266 (ADRHYSREQRYTDHGSDHHYRGKRDDFFYEDRNHDDWSHDYDNRRDSSRDGKWRSSRH) shows a compositional bias: basic and acidic residues.

In terms of assembly, component of the nuclear exosome targeting (NEXT) complex composed of MTREX, ZCCHC8, and RBM7 that directs a subset of non-coding short-lived RNAs for exosomal degradation. Interacts with ZCCHC8 and SF3B2/SAP145. Binds to MTREX through ZCCHC8. Interacts with YWHAE and YWHAZ; these interactions are stress-dependent and RBM7 phosphorylation dependent; release RNA from the NEXT complex and may affect RNA targeting to the nuclear RNA exosomome for degradation. Interacts with MEPCE and LARP7, the core subunits of 7SK snRNP; upon genotoxic stress this interaction is enhanced, triggering the release of inactive P-TEFb complex from the core and P-TEFb complex activation. Post-translationally, phosphorylated at Ser-136 by MAPK14/p38-alpha-activated MAPKAPK2/MK2; this phosphorylation is stress-dependent; this phosphorylation decreases its RNA-binding capacity therefore affecting RNA nuclear exosome-mediated degradation. This phosphorylation mediates YWHAE and YWHAZ interactions. As to expression, ubiquitous.

It is found in the nucleus. Its subcellular location is the nucleoplasm. RNA-binding subunit of the trimeric nuclear exosome targeting (NEXT) complex, a complex that functions as an RNA exosome cofactor that directs a subset of non-coding short-lived RNAs for exosomal degradation. NEXT is involved in surveillance and turnover of aberrant transcripts and non-coding RNAs. Binds preferentially polyuridine sequences and associates with newly synthesized RNAs, including pre-mRNAs and short-lived exosome substrates such as promoter upstream transcripts (PROMPTs), enhancer RNAs (eRNAs), and 3'-extended products from small nuclear RNAs (snRNAs). Participates in several biological processes including DNA damage response (DDR) and stress response. During stress response, activation of the p38MAPK-MK2 pathway decreases RBM7-RNA-binding and subsequently the RNA exosome degradation activities, thereby modulating the turnover of non-coding transcriptome. Participates in DNA damage response (DDR), through its interaction with MEPCE and LARP7, the core subunits of 7SK snRNP complex, that release the positive transcription elongation factor b (P-TEFb) complex from the 7SK snRNP. In turn, activation of P-TEFb complex induces the transcription of P-TEFb-dependent DDR genes to promote cell viability. The sequence is that of RNA-binding protein 7 from Homo sapiens (Human).